The chain runs to 203 residues: Guanylate kinase (203 aa).

Residues 3 to 181 enclose the Guanylate kinase-like domain; the sequence is GTLYIVAAPS…AVSEMCAIFT (179 aa). Position 10–17 (10–17) interacts with ATP; that stretch reads APSGAGKS.

The protein belongs to the guanylate kinase family.

The protein localises to the cytoplasm. The enzyme catalyses GMP + ATP = GDP + ADP. Functionally, essential for recycling GMP and indirectly, cGMP. The chain is Guanylate kinase from Xanthomonas axonopodis pv. citri (strain 306).